A 356-amino-acid polypeptide reads, in one-letter code: Heat-inducible transcription repressor HrcA (356 aa).

Belongs to the HrcA family.

Functionally, negative regulator of class I heat shock genes (grpE-dnaK-dnaJ and groELS operons). Prevents heat-shock induction of these operons. The chain is Heat-inducible transcription repressor HrcA from Chlorobaculum parvum (strain DSM 263 / NCIMB 8327) (Chlorobium vibrioforme subsp. thiosulfatophilum).